A 378-amino-acid polypeptide reads, in one-letter code: Erythronate-4-phosphate dehydrogenase (378 aa).

Residues Ser45 and Thr66 each contribute to the substrate site. 2 residues coordinate NAD(+): Asp146 and Thr175. Arg208 is an active-site residue. Asp232 is an NAD(+) binding site. Glu237 is an active-site residue. Residue His254 is the Proton donor of the active site. Gly257 provides a ligand contact to NAD(+). Tyr258 is a binding site for substrate.

Belongs to the D-isomer specific 2-hydroxyacid dehydrogenase family. PdxB subfamily. As to quaternary structure, homodimer.

The protein resides in the cytoplasm. It carries out the reaction 4-phospho-D-erythronate + NAD(+) = (R)-3-hydroxy-2-oxo-4-phosphooxybutanoate + NADH + H(+). It functions in the pathway cofactor biosynthesis; pyridoxine 5'-phosphate biosynthesis; pyridoxine 5'-phosphate from D-erythrose 4-phosphate: step 2/5. Its function is as follows. Catalyzes the oxidation of erythronate-4-phosphate to 3-hydroxy-2-oxo-4-phosphonooxybutanoate. This is Erythronate-4-phosphate dehydrogenase from Klebsiella pneumoniae (strain 342).